The primary structure comprises 60 residues: Beta-defensin 11 (60 aa).

Positions Met-1 to Ser-22 are cleaved as a signal peptide. Disulfide bonds link Cys-27–Cys-56, Cys-34–Cys-49, and Cys-39–Cys-57.

The protein belongs to the beta-defensin family. In terms of tissue distribution, neutrophilic granules.

It localises to the secreted. Has bactericidal activity. Active against E.coli ML35 and S.aureus 502A. This is Beta-defensin 11 (DEFB11) from Bos taurus (Bovine).